Reading from the N-terminus, the 98-residue chain is Small ribosomal subunit protein bS20 (98 aa).

Positions 1-12 are enriched in basic residues; it reads MAPRKPSKKVGP. Residues 1 to 31 are disordered; that stretch reads MAPRKPSKKVGPQKRPSAEKRVITSKKKQLR.

This sequence belongs to the bacterial ribosomal protein bS20 family.

Its function is as follows. Binds directly to 16S ribosomal RNA. This is Small ribosomal subunit protein bS20 from Chlamydia trachomatis serovar A (strain ATCC VR-571B / DSM 19440 / HAR-13).